The following is a 220-amino-acid chain: Probable GTP-binding protein EngB (220 aa).

An EngB-type G domain is found at E26–P200. GTP-binding positions include G34–S41, G61–L65, D79–G82, T146–D149, and F179–S181. Residues S41 and T63 each coordinate Mg(2+).

This sequence belongs to the TRAFAC class TrmE-Era-EngA-EngB-Septin-like GTPase superfamily. EngB GTPase family. The cofactor is Mg(2+).

Necessary for normal cell division and for the maintenance of normal septation. This is Probable GTP-binding protein EngB from Vibrio cholerae serotype O1 (strain ATCC 39315 / El Tor Inaba N16961).